Consider the following 290-residue polypeptide: Nucleoid occlusion protein (290 aa).

Residues 153–172 (EALAQRLGKGQSTVANKLRL) constitute a DNA-binding region (H-T-H motif).

Belongs to the ParB family.

It localises to the cytoplasm. The protein localises to the nucleoid. Functionally, effects nucleoid occlusion by binding relatively nonspecifically to DNA and preventing the assembly of the division machinery in the vicinity of the nucleoid, especially under conditions that disturb the cell cycle. It helps to coordinate cell division and chromosome segregation by preventing the formation of the Z ring through the nucleoid, which would cause chromosome breakage. The sequence is that of Nucleoid occlusion protein from Bacillus mycoides (strain KBAB4) (Bacillus weihenstephanensis).